Consider the following 313-residue polypeptide: Aspartate carbamoyltransferase catalytic subunit (313 aa).

Carbamoyl phosphate-binding residues include Arg-58 and Thr-59. L-aspartate is bound at residue Lys-86. The carbamoyl phosphate site is built by Arg-108, His-136, and Gln-139. 2 residues coordinate L-aspartate: Arg-169 and Arg-223. Carbamoyl phosphate contacts are provided by Gly-265 and Pro-266.

It belongs to the aspartate/ornithine carbamoyltransferase superfamily. ATCase family. In terms of assembly, heterododecamer (2C3:3R2) of six catalytic PyrB chains organized as two trimers (C3), and six regulatory PyrI chains organized as three dimers (R2).

It carries out the reaction carbamoyl phosphate + L-aspartate = N-carbamoyl-L-aspartate + phosphate + H(+). The protein operates within pyrimidine metabolism; UMP biosynthesis via de novo pathway; (S)-dihydroorotate from bicarbonate: step 2/3. Its function is as follows. Catalyzes the condensation of carbamoyl phosphate and aspartate to form carbamoyl aspartate and inorganic phosphate, the committed step in the de novo pyrimidine nucleotide biosynthesis pathway. In Anaeromyxobacter sp. (strain K), this protein is Aspartate carbamoyltransferase catalytic subunit.